Here is a 281-residue protein sequence, read N- to C-terminus: General control transcription factor GCN4 (281 aa).

Position 17 is a phosphoserine (S17). 2 required for transcriptional activation regions span residues 89 to 100 (LDDAVVESFFSS) and 106 to 125 (PMFE…SLFD). T165 is modified (phosphothreonine; by PHO85). The Nuclear localization signal motif lies at 167 to 200 (VLEDAKLTQTRKVKKPNSVVKKSHHVGKDDESRL). Residues 217–248 (LSPIVPESSDPAALKRARNTEAARRSRARKLQ) are disordered. S218 is subject to Phosphoserine. Residues 225-281 (SDPAALKRARNTEAARRSRARKLQRMKQLEDKVEELLSKNYHLENEVARLKKLVGER) form the bZIP domain. Positions 231 to 249 (KRARNTEAARRSRARKLQR) match the Nuclear localization signal motif. The interval 231–251 (KRARNTEAARRSRARKLQRMK) is basic motif. Positions 253-274 (LEDKVEELLSKNYHLENEVARL) are leucine-zipper.

The protein belongs to the bZIP family. GCN4 subfamily. In terms of assembly, homodimer. Each subunit binds overlapping and non-identical half-sites that flank the central CG base-pair in the pseudo-palindromic motif 5'-ATGA[CG]TCAT-3'. Interacts with the mediator tail; the interaction with GAL11/MED15 is direct. Interacts with the SAGA histone acetyltransferase complex. Interacts with the SWI/SNF chromatin remodeling complex. Phosphorylated by the cyclin-CDK PCL5-PHO85. Phosphorylation of Thr-165 induces degradation of GCN4 by the E3 ubiquitin ligase complex SCF(Cdc4).

The protein resides in the nucleus. Functionally, master transcriptional regulator that mediates the response to amino acid starvation. Binds variations of the DNA sequence 5'-ATGA[CG]TCAT-3' in canonical nucleosome-depleted 5'-positioned promoters, and also within coding sequences and 3' non-coding regions. During nutrient starvation (low or poor amino acid, carbon or purine sources), it activates genes required for amino acid biosynthesis and transport, autophagy, cofactor biosynthesis and transport, mitochondrial transport, and additional downstream transcription factors. Activates transcription by recruiting multiple coactivators, including the mediator complex, the SAGA complex, and the SWI/SNF complex, to enable assembly of the pre-initiation complex at core promoters. The protein is General control transcription factor GCN4 of Saccharomyces cerevisiae (strain ATCC 204508 / S288c) (Baker's yeast).